We begin with the raw amino-acid sequence, 34 residues long: Photosystem II reaction center protein T (34 aa).

The chain crosses the membrane as a helical span at residues 3-23 (ALVYTFLLVGTLGIIFFAIFF).

This sequence belongs to the PsbT family. As to quaternary structure, PSII is composed of 1 copy each of membrane proteins PsbA, PsbB, PsbC, PsbD, PsbE, PsbF, PsbH, PsbI, PsbJ, PsbK, PsbL, PsbM, PsbT, PsbY, PsbZ, Psb30/Ycf12, at least 3 peripheral proteins of the oxygen-evolving complex and a large number of cofactors. It forms dimeric complexes.

Its subcellular location is the plastid. The protein localises to the chloroplast thylakoid membrane. Its function is as follows. Found at the monomer-monomer interface of the photosystem II (PS II) dimer, plays a role in assembly and dimerization of PSII. PSII is a light-driven water plastoquinone oxidoreductase, using light energy to abstract electrons from H(2)O, generating a proton gradient subsequently used for ATP formation. The protein is Photosystem II reaction center protein T of Klebsormidium bilatum (Filamentous green alga).